Consider the following 197-residue polypeptide: Ribosome maturation factor RimM (197 aa).

The 76-residue stretch at 99-174 (EDEFYQVDLI…LVVEPVAAGL (76 aa)) folds into the PRC barrel domain.

The protein belongs to the RimM family. As to quaternary structure, binds ribosomal protein uS19.

The protein localises to the cytoplasm. In terms of biological role, an accessory protein needed during the final step in the assembly of 30S ribosomal subunit, possibly for assembly of the head region. Essential for efficient processing of 16S rRNA. May be needed both before and after RbfA during the maturation of 16S rRNA. It has affinity for free ribosomal 30S subunits but not for 70S ribosomes. This is Ribosome maturation factor RimM from Bartonella quintana (strain Toulouse) (Rochalimaea quintana).